The primary structure comprises 95 residues: Small ribosomal subunit protein uS19 (95 aa).

Belongs to the universal ribosomal protein uS19 family.

Its function is as follows. Protein S19 forms a complex with S13 that binds strongly to the 16S ribosomal RNA. This chain is Small ribosomal subunit protein uS19, found in Thermotoga sp. (strain RQ2).